Consider the following 691-residue polypeptide: Pentatricopeptide repeat-containing protein At5g27110 (691 aa).

16 PPR repeats span residues 38 to 68, 70 to 104, 106 to 140, 141 to 171, 172 to 206, 207 to 241, 242 to 272, 273 to 307, 308 to 342, 343 to 373, 374 to 408, 409 to 443, 444 to 474, 475 to 509, 510 to 540, and 546 to 576; these read DVVLCKSLINVYFTCKDHCSARHVFENFDIR, DVYIWNSLMSGYSKNSMFHDTLEVFKRLLNCSICV, DSFTFPNVIKAYGALGREFLGRMIHTLVVKSGYVC, DVVVASSLVGMYAKFNLFENSLQVFDEMPER, DVASWNTVISCFYQSGEAEKALELFGRMESSGFEP, NSVSLTVAISACSRLLWLERGKEIHRKCVKKGFEL, DEYVNSALVDMYGKCDCLEVAREVFQKMPRK, SLVAWNSMIKGYVAKGDSKSCVEILNRMIIEGTRP, SQTTLTSILMACSRSRNLLHGKFIHGYVIRSVVNA, DIYVNCSLIDLYFKCGEANLAETVFSKTQKD, VAESWNVMISSYISVGNWFKAVEVYDQMVSVGVKP, DVVTFTSVLPACSQLAALEKGKQIHLSISESRLET, DELLLSALLDMYSKCGNEKEAFRIFNSIPKK, DVVSWTVMISAYGSHGQPREALYQFDEMQKFGLKP, DGVTLLAVLSACGHAGLIDEGLKFFSQMRSK, and IIEHYSCMIDILGRAGRLLEAYEIIQQTPET. The segment at 582-657 is type E motif; that stretch reads LLSTLFSACC…KPGCSWIEMS (76 aa). A type E(+) motif region spans residues 658-688; the sequence is DKVCHFFAEDRSHLRAENVYECLALLSGHME.

The protein belongs to the PPR family. PCMP-E subfamily.

This chain is Pentatricopeptide repeat-containing protein At5g27110 (PCMP-E14), found in Arabidopsis thaliana (Mouse-ear cress).